Consider the following 125-residue polypeptide: Large ribosomal subunit protein bL12 (125 aa).

It belongs to the bacterial ribosomal protein bL12 family. In terms of assembly, homodimer. Part of the ribosomal stalk of the 50S ribosomal subunit. Forms a multimeric L10(L12)X complex, where L10 forms an elongated spine to which 2 to 4 L12 dimers bind in a sequential fashion. Binds GTP-bound translation factors.

Forms part of the ribosomal stalk which helps the ribosome interact with GTP-bound translation factors. Is thus essential for accurate translation. The sequence is that of Large ribosomal subunit protein bL12 from Azoarcus sp. (strain BH72).